A 250-amino-acid chain; its full sequence is 5-oxoprolinase subunit A (250 aa).

Belongs to the LamB/PxpA family. In terms of assembly, forms a complex composed of PxpA, PxpB and PxpC.

It catalyses the reaction 5-oxo-L-proline + ATP + 2 H2O = L-glutamate + ADP + phosphate + H(+). Catalyzes the cleavage of 5-oxoproline to form L-glutamate coupled to the hydrolysis of ATP to ADP and inorganic phosphate. This chain is 5-oxoprolinase subunit A, found in Streptomyces avermitilis (strain ATCC 31267 / DSM 46492 / JCM 5070 / NBRC 14893 / NCIMB 12804 / NRRL 8165 / MA-4680).